The primary structure comprises 1724 residues: Protein CHROMATIN REMODELING 5 (1724 aa).

2 disordered regions span residues 24 to 88 and 104 to 415; these read QNAA…QSST and DCQP…DDIE. A compositionally biased stretch (polar residues) spans 25 to 34; it reads NAATFQSSPL. Over residues 126–144 the composition is skewed to basic and acidic residues; it reads EAYHSEDNHSNDRSEKLDS. The stretch at 138 to 164 forms a coiled coil; it reads RSEKLDSENENDNENEEEDNEMNKHQS. Acidic residues-rich tracts occupy residues 145-157, 170-186, 239-264, and 278-297; these read ENEN…EEDN, PADE…DEDN, ADMD…DAAD, and VSDE…YEDD. A compositionally biased stretch (basic residues) spans 301–313; sequence KKPKVRQQSKGFR. Residues 320–327 carry the Nuclear localization signal 1 motif; it reads ERKSFHVS. The segment covering 337–350 has biased composition (acidic residues); the sequence is QDDDSEEDSENDND. The span at 362-376 shows a compositional bias: polar residues; that stretch reads TLRQNNGRSTNTIGQ. A compositionally biased stretch (basic and acidic residues) spans 403–412; sequence DGKNRKNQKD. A Chromo 1 domain is found at 420–499; that stretch reads DVIEKVLWHQ…FKKVLNYTKK (80 aa). Residues 505–525 are a coiled coil; sequence RYRTALSREEIEVNDVSKEMD. The region spanning 533 to 597 is the Chromo 2 domain; that stretch reads SQVERIIADR…REVSIAVQGK (65 aa). In terms of domain architecture, Helicase ATP-binding spans 637-809; sequence VNSWLNDTNV…WALLHFLDPG (173 aa). Residue 650–657 coordinates ATP; it reads DEMGLGKT. A DEAH box motif is present at residues 760 to 763; that stretch reads DEAH. The region spanning 943 to 1094 is the Helicase C-terminal domain; sequence ILDKLLVRLR…HLVIQKLNAE (152 aa). Residues 1126 to 1163 are a coiled coil; it reads KEDKNDEESKKRLLSMDIDEILERAEQVEEKHTDETEH. A disordered region spans residues 1199 to 1245; that stretch reads ALAPRAARNTKSYVDPSHPDRTSKRKKKGSEPPEHTERSQKRRKTEY. 2 consecutive short sequence motifs (nuclear localization signal) follow at residues 1224-1231 and 1348-1355; these read KKKGSEPP and LKRVQGLQ. A compositionally biased stretch (basic and acidic residues) spans 1227–1237; it reads GSEPPEHTERS. Disordered stretches follow at residues 1480–1524 and 1654–1724; these read QFKA…EMSD and KFKT…FPPR. Residues 1504-1520 show a composition bias toward basic and acidic residues; it reads DGPRKTQKAEPLVKEEG. Over residues 1658 to 1667 the composition is skewed to polar residues; sequence AGNSQGSQQV. Over residues 1669 to 1691 the composition is skewed to basic and acidic residues; it reads KGIDTAKFEAWKRRRRTENDVQT. Over residues 1692–1702 the composition is skewed to polar residues; the sequence is ERPTITNSNSL.

This sequence belongs to the SNF2/RAD54 helicase family.

The protein resides in the nucleus. Its function is as follows. DNA-binding helicase that specifically binds to the promoter of target genes, leading to chromatin remodeling, possibly by promoting deposition of histone H3.3. Probable chromatin remodeling factor. This chain is Protein CHROMATIN REMODELING 5, found in Arabidopsis thaliana (Mouse-ear cress).